The primary structure comprises 417 residues: Probable histone-binding protein lin-53 (417 aa).

WD repeat units lie at residues 118–158, 170–210, 220–260, 263–303, 307–347, and 364–404; these read NHEG…AVPR, GHTK…NVAG, GHES…PGHC, AHSA…MKLH, SHRD…EDQS, and GHTA…YNEV.

It belongs to the WD repeat RBAP46/RBAP48/MSI1 family. Binds directly to helix 1 of the histone fold of histone H4, a region that is not accessible when H4 is in chromatin. Probable component of a NuRD-like complex, composed of at least lin-53 and hda-1. Interacts with lin-35. Interacts with hda-1; the interaction is direct. Component of the DRM complex, at least composed of lin-9, lin-35, lin-37, lin-52, lin-53, lin-54- dpl-1 and efl-1. Interacts with hcp-3.

It localises to the nucleus. It is found in the chromosome. The protein localises to the centromere. Functionally, core histone-binding subunit that may target chromatin assembly factors, chromatin remodeling factors and histone deacetylases to their histone substrates in a manner that is regulated by nucleosomal DNA. Required for hcp-3 and his-1 stabilization, localization of hcp-3 to centromeres and for proper chromosome segregation. Synthetic multivulva class B (synMuvB) protein. SynMuvB proteins are required to repress the induction of vulval development by Ras signaling and probably act by forming the multiprotein DRM complex that represses transcription. This chain is Probable histone-binding protein lin-53, found in Caenorhabditis elegans.